The following is a 288-amino-acid chain: CBY1-interacting BAR domain-containing protein 1 (288 aa).

The N-terminal 47 residues, 1 to 47 (MLRRSLENRDAQTRQLQDAVTNVEKHFGELCQIFAAYVRKTARLRDK), are a transit peptide targeting the mitochondrion. Residues 10–220 (DAQTRQLQDA…KIDEEEDLEV (211 aa)) are BAR-like. The stretch at 107 to 176 (KMKRDDLKAT…ETIDNFEKQK (70 aa)) forms a coiled coil. Residues 266 to 288 (RKDHQTEDDDEEDEDLDVTEEEN) are disordered. Acidic residues predominate over residues 271-288 (TEDDDEEDEDLDVTEEEN).

This sequence belongs to the CIBAR family. As to quaternary structure, homodimer (via BAR-like domain). Heterodimer with FAM92B (via BAR-like domains). Interacts (via BAR-like domain) with CBY1; this interaction is required for targeting FAM92A to centriole and cilium basal body. Interacts (via BAR-like domain) with CBY3; both proteins form a ninefold symmetric structure at the flagellar base; are recruited to the annulus in a mutually dependent manner and regulate annulus positionning.

It localises to the cytoplasm. It is found in the cytoskeleton. The protein resides in the microtubule organizing center. Its subcellular location is the centrosome. The protein localises to the centriole. It localises to the cilium basal body. It is found in the cell projection. The protein resides in the cilium. Its subcellular location is the nucleus. The protein localises to the mitochondrion inner membrane. It localises to the flagellum. Plays a critical role in regulating mitochondrial ultrastructure and function by maintaining the integrity of mitochondrial morphology, particularly the organization of cristae. Preferentially binds to negatively charged phospholipids like cardiolipin and phosphatidylinositol 4,5-bisphosphate enhancing its interaction with mitochondrial membranes. Induces membrane curvature and tubulation, which are critical for maintaining mitochondrial ultrastructure and the organization of cristae. Plays a crucial role in ciliogenesis. May play a role in limb development through its role in ciliogenesis. Plays a key role in the correct positioning of the annulus, a septin-based ring structure in the sperm flagellum, serving both as a physical barrier and a membrane diffusion barrier that separates the midpiece (MP) from the principal piece (PP). This positioning is essential for proper sperm motility and function. Interacts with CBY3 to form a complex which localizes to the curved membrane region of the flagellar pocket. By doing so, may provide stability and rigidity to the periannular membrane to prevent membrane deformation. This function is crucial for halting annulus migration at the proximal end of the fibrous sheath-containing PP. The chain is CBY1-interacting BAR domain-containing protein 1 from Bos taurus (Bovine).